Reading from the N-terminus, the 386-residue chain is Prostacyclin receptor (386 aa).

Residues 1-16 lie on the Extracellular side of the membrane; that stretch reads MADSCRNLTYVRGSVG. Disulfide bonds link cysteine 5–cysteine 165 and cysteine 92–cysteine 170. Asparagine 7 carries N-linked (GlcNAc...) asparagine glycosylation. The chain crosses the membrane as a helical span at residues 17 to 38; the sequence is PATSTLMFVAGVVGNGLALGIL. The Cytoplasmic segment spans residues 39–51; sequence SARRPARPSAFAV. Residues 52 to 76 traverse the membrane as a helical segment; sequence LVTGLAATDLLGTSFLSPAVFVAYA. Residues 77 to 94 lie on the Extracellular side of the membrane; the sequence is RNSSLLGLARGGPALCDA. A helical membrane pass occupies residues 95-115; the sequence is FAFAMTFFGLASMLILFAMAV. Over 116-134 the chain is Cytoplasmic; sequence ERCLALSHPYLYAQLDGPR. The chain crosses the membrane as a helical span at residues 135–158; the sequence is CARLALPAIYAFCVLFCALPLLGL. Topologically, residues 159-181 are extracellular; it reads GQHQQYCPGSWCFLRMRWAQPGG. Residues 182–208 traverse the membrane as a helical segment; it reads AAFSLAYAGLVALLVAAIFLCNGSVTL. The Cytoplasmic segment spans residues 209-235; it reads SLCRMYRQQKRHQGSLGPRPRTGEDEV. A helical transmembrane segment spans residues 236-260; the sequence is DHLILLALMTVVMAVCSLPLTIRCF. At 261-274 the chain is on the extracellular side; that stretch reads TQAVAPDSSSEMGD. The helical transmembrane segment at 275 to 295 threads the bilayer; the sequence is LLAFRFYAFNPILDPWVFILF. Residues 296 to 386 lie on the Cytoplasmic side of the membrane; the sequence is RKAVFQRLKL…AEASVACSLC (91 aa). The segment at 322–376 is disordered; it reads PLSQLASGRRDPRAPSAPVGKEGSCVPLSAWGEGQVEPLPPTQQSSGSAVGTSSK. A compositionally biased stretch (polar residues) spans 363 to 376; that stretch reads TQQSSGSAVGTSSK. Cysteine 383 carries the cysteine methyl ester modification. Cysteine 383 carries S-farnesyl cysteine lipidation. A propeptide spans 384–386 (removed in mature form); sequence SLC.

Belongs to the G-protein coupled receptor 1 family. As to quaternary structure, interacts (non-isoprenylated C-terminus) with PDZK1. Post-translationally, isoprenylation does not influence ligand binding but is required for efficient coupling to the effectors adenylyl cyclase and phospholipase C.

The protein localises to the cell membrane. In terms of biological role, receptor for prostacyclin (prostaglandin I2 or PGI2). The activity of this receptor is mediated by G(s) proteins which activate adenylate cyclase. The sequence is that of Prostacyclin receptor (PTGIR) from Homo sapiens (Human).